Here is a 146-residue protein sequence, read N- to C-terminus: Hemoglobin cathodic subunit beta (146 aa).

In terms of domain architecture, Globin spans 2–146; it reads QWSSSERSTI…VVSALSRQYF (145 aa). Residues His-63 and His-92 each coordinate heme b.

It belongs to the globin family. As to quaternary structure, heterotetramer of two alpha chains and two beta chains. As to expression, red blood cells.

Involved in oxygen transport from the gills to the various peripheral tissues. The protein is Hemoglobin cathodic subunit beta of Conger conger (Conger eel).